Consider the following 205-residue polypeptide: Ribosome maturation factor RimP (205 aa).

Residues 1 to 12 (MSNAEAQASSDH) show a composition bias toward polar residues. Disordered regions lie at residues 1-24 (MSNA…APAH) and 186-205 (FSHL…SEEA).

The protein belongs to the RimP family.

Its subcellular location is the cytoplasm. Its function is as follows. Required for maturation of 30S ribosomal subunits. In Pseudarthrobacter chlorophenolicus (strain ATCC 700700 / DSM 12829 / CIP 107037 / JCM 12360 / KCTC 9906 / NCIMB 13794 / A6) (Arthrobacter chlorophenolicus), this protein is Ribosome maturation factor RimP.